Here is a 25-residue protein sequence, read N- to C-terminus: Dermaseptin-5.2TR (25 aa).

A Valine amide modification is found at V25.

In terms of tissue distribution, expressed by the skin glands.

It localises to the secreted. Functionally, has antimicrobial activity. This chain is Dermaseptin-5.2TR, found in Phyllomedusa trinitatis (Trinidad leaf frog).